The chain runs to 171 residues: Shikimate kinase (171 aa).

Residue 14–19 (GAGKST) participates in ATP binding. Mg(2+) is bound at residue S18. Residues D36, R60, and G82 each coordinate substrate. Position 120 (R120) interacts with ATP. Residue R139 participates in substrate binding. Q156 serves as a coordination point for ATP.

Belongs to the shikimate kinase family. As to quaternary structure, monomer. Mg(2+) serves as cofactor.

The protein localises to the cytoplasm. The catalysed reaction is shikimate + ATP = 3-phosphoshikimate + ADP + H(+). Its pathway is metabolic intermediate biosynthesis; chorismate biosynthesis; chorismate from D-erythrose 4-phosphate and phosphoenolpyruvate: step 5/7. Functionally, catalyzes the specific phosphorylation of the 3-hydroxyl group of shikimic acid using ATP as a cosubstrate. The chain is Shikimate kinase from Shewanella sp. (strain MR-4).